The chain runs to 716 residues: Interleukin-31 receptor subunit alpha (716 aa).

The first 18 residues, methionine 1–alanine 18, serve as a signal peptide directing secretion. Residues valine 19–threonine 499 are Extracellular-facing. Fibronectin type-III domains are found at residues lysine 23 to threonine 115, proline 117 to glutamate 211, proline 213 to isoleucine 304, proline 305 to alanine 403, and proline 408 to isoleucine 502. N-linked (GlcNAc...) asparagine glycosylation is found at asparagine 36, asparagine 48, and asparagine 64. The N-linked (GlcNAc...) asparagine glycan is linked to asparagine 382. The helical transmembrane segment at leucine 500–leucine 520 threads the bilayer. Residues leucine 521–valine 716 are Cytoplasmic-facing. Disordered regions lie at residues glutamate 622–proline 641 and alanine 648–serine 696. Over residues glutamine 670 to glycine 679 the composition is skewed to polar residues.

The protein belongs to the type I cytokine receptor family. Type 2 subfamily. As to quaternary structure, heterodimer with OSMR. Interacts with JAK1 and STAT3. N-glycosylated. As to expression, expressed in a subset of dorsal root ganglia neurons. Expressed in spinal cord and trigeminal ganglion (at protein level). Expressed in skin, testis, bone marrow and thymus.

The protein resides in the cell membrane. It localises to the presynaptic cell membrane. It is found in the cell projection. Its subcellular location is the axon. Functionally, associates with OSMR to form the interleukin-31 receptor which activates STAT3 and to a lower extent STAT1 and STAT5. May function in skin immunity. Mediates IL31-induced itch, probably in a manner dependent on cation channels TRPA1 and TRPV1. Positively regulates numbers and cycling status of immature subsets of myeloid progenitor cells in bone marrow in vivo and enhances myeloid progenitor cell survival in vitro. This is Interleukin-31 receptor subunit alpha (Il31ra) from Mus musculus (Mouse).